Here is a 303-residue protein sequence, read N- to C-terminus: CDAN1-interacting nuclease 1 (303 aa).

It is found in the nucleus. It localises to the cytoplasm. May play a role in erythroid cell differentiation. In Xenopus tropicalis (Western clawed frog), this protein is CDAN1-interacting nuclease 1 (cdin1).